The sequence spans 848 residues: Neuroligin-3 (848 aa).

Positions Met1–Thr37 are cleaved as a signal peptide. The Extracellular portion of the chain corresponds to Gln38–Ser709. An N-linked (GlcNAc...) asparagine glycan is attached at Asn98. A disulfide bridge connects residues Cys106 and Cys141. The interval Cys169–Arg195 is disordered. Acidic residues predominate over residues Asp182–Ile194. Intrachain disulfides connect Cys340-Cys351 and Cys510-Cys544. N-linked (GlcNAc...) asparagine glycosylation occurs at Asn545. 2 stretches are compositionally biased toward polar residues: residues Thr645–Ser656 and Ala677–Gly689. The tract at residues Thr645 to Gln691 is disordered. A helical transmembrane segment spans residues Val710 to Tyr730. Residues Tyr731–Val848 are Cytoplasmic-facing. Ser745 is subject to Phosphoserine. Tyr792 is subject to Phosphotyrosine.

The protein belongs to the type-B carboxylesterase/lipase family. Homodimer, and heterodimer with NLGN1 and NLGN2. Interacts with neurexins NRXN1, NRXN2 and NRXN3. Interaction with neurexins is mediated by heparan sulfate glycan modification on neurexin. Interacts (via its C-terminus) with DLG4/PSD-95 (via PDZ domain 3). The N-terminus is blocked. In terms of tissue distribution, detected in brain and on hippocampus neurons, especially at excitatory synapses. Detected in retina (at protein level). Expressed in brain, spinal cord and dorsal root ganglion.

The protein localises to the cell membrane. The protein resides in the synapse. Cell surface protein involved in cell-cell-interactions via its interactions with neurexin family members. Plays a role in synapse function and synaptic signal transmission, and probably mediates its effects by recruiting and clustering other synaptic proteins. May promote the initial formation of synapses, but is not essential for this. May also play a role in glia-glia or glia-neuron interactions in the developing peripheral nervous system. The sequence is that of Neuroligin-3 (Nlgn3) from Rattus norvegicus (Rat).